Here is a 499-residue protein sequence, read N- to C-terminus: MVKALMVQGTASDAGKSIIAAGLCRIFKQDGLEVVPFKSQNMALNSFITKKGDEMGRAQVVQAEAAGKEPDVRMNPVLLKPTSDRKSQVVFLGRVLRDMDAVEYHEYKQQLLPKIKEVYDELGAENDIIVIEGAGSPAEINLNDRDIVNMGMAKLVDAPVILVADIDKGGVFASIYGTIELMPPEDRKRIKGVIINKFRGDVALLQSGIDMIEELTQVPVIGVVPYAQLDIDSEDSVALVQKSRRFDSRKSLDIAVVSLKRLSNFTDFHSLEIQPDVSVRYVQPGDAIGRPDLLILPGSKNTIEDMNYLCESGLEAEILECLEQGVRIFGICGGYQLLGQKISDPLHLESDLEETRGLGILETETVLQPVKRTTQVRALHEGQELEGYEIHMGETQLADRLEPFSIIKEQNGEATERPDGAVAYGGQVQGTYLHGVFDNLEWTRQYLNELRLAKGLEPLEDQLVSIKDFKDREYDKLADVLRQSLDMEQIYQIINREEK.

A GATase cobBQ-type domain is found at 251–442 (SLDIAVVSLK…LHGVFDNLEW (192 aa)). Catalysis depends on C332, which acts as the Nucleophile. H434 is a catalytic residue.

It belongs to the CobB/CobQ family. CobQ subfamily.

It participates in cofactor biosynthesis; adenosylcobalamin biosynthesis. Its function is as follows. Catalyzes amidations at positions B, D, E, and G on adenosylcobyrinic A,C-diamide. NH(2) groups are provided by glutamine, and one molecule of ATP is hydrogenolyzed for each amidation. This chain is Cobyric acid synthase, found in Streptococcus sanguinis (strain SK36).